The primary structure comprises 198 residues: Ribonuclease HII (198 aa).

An RNase H type-2 domain is found at 5–195 (LRVAGVDEAG…VKAWLASHQG (191 aa)). Residues Asp11, Glu12, and Asp103 each contribute to the a divalent metal cation site.

The protein belongs to the RNase HII family. Mn(2+) serves as cofactor. The cofactor is Mg(2+).

It localises to the cytoplasm. It carries out the reaction Endonucleolytic cleavage to 5'-phosphomonoester.. Endonuclease that specifically degrades the RNA of RNA-DNA hybrids. This Chromobacterium violaceum (strain ATCC 12472 / DSM 30191 / JCM 1249 / CCUG 213 / NBRC 12614 / NCIMB 9131 / NCTC 9757 / MK) protein is Ribonuclease HII.